A 189-amino-acid chain; its full sequence is uncharacterized protein (189 aa).

3 helical membrane-spanning segments follow: residues 2 to 22 (LVVV…HHLL), 93 to 113 (ILFY…YFIL), and 116 to 136 (FYST…LHTL).

It localises to the membrane. This is an uncharacterized protein from Schizosaccharomyces pombe (strain 972 / ATCC 24843) (Fission yeast).